The sequence spans 348 residues: Cyclic AMP-dependent transcription factor ATF-4 (348 aa).

K53 is covalently cross-linked (Glycyl lysine isopeptide (Lys-Gly) (interchain with G-Cter in SUMO2)). Disordered stretches follow at residues Q151–H174 and P187–M265. A phosphoserine mark is found at S211, S215, S220, S227, and S231. Positions S211–S220 match the BetaTrCP degron motif motif. The span at P221–K241 shows a compositional bias: polar residues. The residue at position 232 (P232) is a 4-hydroxyproline. Phosphoserine occurs at positions 242 and 245. Residues S242–S253 show a composition bias toward low complexity. Glycyl lysine isopeptide (Lys-Gly) (interchain with G-Cter in SUMO2) cross-links involve residues K256, K264, and K269. The bZIP domain maps to L275–V338. Residues K277–R297 are basic motif. Positions A302–V338 are interaction with GABBR1. Residues L303–L331 are leucine-zipper. K308 bears the N6-acetyllysine mark.

The protein belongs to the bZIP family. Binds DNA as a homodimer and as a heterodimer. Heterodimer; heterodimerizes with CEBPB. Heterodimer; heterodimerizes with DDIT3/CHOP. Interacts with CEP290 (via an N-terminal region). Interacts with NEK6, DAPK2 (isoform 2) and ZIPK/DAPK3. Interacts (via its leucine zipper domain) with GABBR1 and GABBR2 (via their C-termini). Forms a heterodimer with TXLNG in osteoblasts. Interacts (via its DNA binding domain) with FOXO1 (C-terminal half); the interaction occurs in osteoblasts and regulates glucose homeostasis through suppression of beta-cell proliferation and a decrease in insulin production. Interacts with SATB2; the interaction results in enhanced DNA binding and transactivation by these transcription factors. Interacts with ABRAXAS2. Interacts with TRIB3, inhibiting the transactivation activity of ATF4. Interacts with DISC1; which inhibits ATF4 transcription factor activity by disrupting ATF4 dimerization and DNA-binding. Interacts with EP300/p300; EP300/p300 stabilizes ATF4 and increases its transcriptional activity independently of its catalytic activity by preventing its ubiquitination. Ubiquitinated by SCF(BTRC) in response to mTORC1 signal, followed by proteasomal degradation and leading to down-regulate expression of SIRT4. Interaction with EP300/p300 inhibits ubiquitination by SCF(BTRC). In terms of processing, phosphorylation at Ser-242 by RPS6KA3/RSK2 in osteoblasts enhances transactivation activity and promotes osteoblast differentiation. Phosphorylated on the betaTrCP degron motif at Ser-215, followed by phosphorylation at Ser-220, Ser-227, Ser-231 and Ser-245, promoting interaction with BTRC and ubiquitination. Phosphorylation is promoted by mTORC1. Phosphorylation at Ser-211 by CK2 decreases its stability. Phosphorylated by NEK6. Post-translationally, hydroxylated by PHD3, leading to decreased protein stability.

The protein resides in the nucleus. It is found in the nucleus speckle. It localises to the cytoplasm. The protein localises to the cell membrane. Its subcellular location is the cytoskeleton. The protein resides in the microtubule organizing center. It is found in the centrosome. In terms of biological role, transcription factor that binds the cAMP response element (CRE) (consensus: 5'-GTGACGT[AC][AG]-3') and displays two biological functions, as regulator of metabolic and redox processes under normal cellular conditions, and as master transcription factor during integrated stress response (ISR). Binds to asymmetric CRE's as a heterodimer and to palindromic CRE's as a homodimer. Core effector of the ISR, which is required for adaptation to various stress such as endoplasmic reticulum (ER) stress, amino acid starvation, mitochondrial stress or oxidative stress. During ISR, ATF4 translation is induced via an alternative ribosome translation re-initiation mechanism in response to EIF2S1/eIF-2-alpha phosphorylation, and stress-induced ATF4 acts as a master transcription factor of stress-responsive genes in order to promote cell recovery. Promotes the transcription of genes linked to amino acid sufficiency and resistance to oxidative stress to protect cells against metabolic consequences of ER oxidation. Activates the transcription of NLRP1, possibly in concert with other factors in response to ER stress. Activates the transcription of asparagine synthetase (ASNS) in response to amino acid deprivation or ER stress. However, when associated with DDIT3/CHOP, the transcriptional activation of the ASNS gene is inhibited in response to amino acid deprivation. Together with DDIT3/CHOP, mediates programmed cell death by promoting the expression of genes involved in cellular amino acid metabolic processes, mRNA translation and the terminal unfolded protein response (terminal UPR), a cellular response that elicits programmed cell death when ER stress is prolonged and unresolved. Activates the expression of COX7A2L/SCAF1 downstream of the EIF2AK3/PERK-mediated unfolded protein response, thereby promoting formation of respiratory chain supercomplexes and increasing mitochondrial oxidative phosphorylation. Together with DDIT3/CHOP, activates the transcription of the IRS-regulator TRIB3 and promotes ER stress-induced neuronal cell death by regulating the expression of BBC3/PUMA in response to ER stress. May cooperate with the UPR transcriptional regulator QRICH1 to regulate ER protein homeostasis which is critical for cell viability in response to ER stress. In the absence of stress, ATF4 translation is at low levels and it is required for normal metabolic processes such as embryonic lens formation, fetal liver hematopoiesis, bone development and synaptic plasticity. Acts as a regulator of osteoblast differentiation in response to phosphorylation by RPS6KA3/RSK2: phosphorylation in osteoblasts enhances transactivation activity and promotes expression of osteoblast-specific genes and post-transcriptionally regulates the synthesis of Type I collagen, the main constituent of the bone matrix. Cooperates with FOXO1 in osteoblasts to regulate glucose homeostasis through suppression of beta-cell production and decrease in insulin production. Activates transcription of SIRT4. Regulates the circadian expression of the core clock component PER2 and the serotonin transporter SLC6A4. Binds in a circadian time-dependent manner to the cAMP response elements (CRE) in the SLC6A4 and PER2 promoters and periodically activates the transcription of these genes. Mainly acts as a transcriptional activator in cellular stress adaptation, but it can also act as a transcriptional repressor: acts as a regulator of synaptic plasticity by repressing transcription, thereby inhibiting induction and maintenance of long-term memory. Regulates synaptic functions via interaction with DISC1 in neurons, which inhibits ATF4 transcription factor activity by disrupting ATF4 dimerization and DNA-binding. The protein is Cyclic AMP-dependent transcription factor ATF-4 of Bos taurus (Bovine).